Consider the following 49-residue polypeptide: Large ribosomal subunit protein bL33 (49 aa).

Residues 18–49 (ITTKNKRNNPERLELKKYSPRLKRTTLHRETK) are disordered. Over residues 25–34 (NNPERLELKK) the composition is skewed to basic and acidic residues.

It belongs to the bacterial ribosomal protein bL33 family.

In Lysinibacillus sphaericus (strain C3-41), this protein is Large ribosomal subunit protein bL33.